The primary structure comprises 152 residues: 3-dehydroquinate dehydratase (152 aa).

Y25 functions as the Proton acceptor in the catalytic mechanism. Positions 76, 82, and 89 each coordinate substrate. The Proton donor role is filled by H102. Substrate contacts are provided by residues 103-104 (LS) and R113.

It belongs to the type-II 3-dehydroquinase family. In terms of assembly, homododecamer.

It catalyses the reaction 3-dehydroquinate = 3-dehydroshikimate + H2O. The protein operates within metabolic intermediate biosynthesis; chorismate biosynthesis; chorismate from D-erythrose 4-phosphate and phosphoenolpyruvate: step 3/7. Functionally, catalyzes a trans-dehydration via an enolate intermediate. This Gloeothece citriformis (strain PCC 7424) (Cyanothece sp. (strain PCC 7424)) protein is 3-dehydroquinate dehydratase.